We begin with the raw amino-acid sequence, 95 residues long: Protein TusB (95 aa).

This sequence belongs to the DsrH/TusB family. As to quaternary structure, heterohexamer, formed by a dimer of trimers. The hexameric TusBCD complex contains 2 copies each of TusB, TusC and TusD. The TusBCD complex interacts with TusE.

It localises to the cytoplasm. Its function is as follows. Part of a sulfur-relay system required for 2-thiolation of 5-methylaminomethyl-2-thiouridine (mnm(5)s(2)U) at tRNA wobble positions. In Erwinia tasmaniensis (strain DSM 17950 / CFBP 7177 / CIP 109463 / NCPPB 4357 / Et1/99), this protein is Protein TusB.